A 133-amino-acid chain; its full sequence is Small ribosomal subunit protein uS9 (133 aa).

This sequence belongs to the universal ribosomal protein uS9 family.

The polypeptide is Small ribosomal subunit protein uS9 (Ureaplasma parvum serovar 3 (strain ATCC 700970)).